The chain runs to 1248 residues: Kinesin-like protein KIN-14I (1248 aa).

Residues 88 to 244 enclose the MyTH4 domain; the sequence is FQKDPIPTSL…PAREEIEALL (157 aa). Positions 249–563 constitute an FERM domain; sequence LTTIVFFLDE…HINDVMLRRY (315 aa). Residues 586–659 are a coiled coil; it reads NIEIYEKRVQ…LDKLKSLCDE (74 aa). Positions 675-704 are disordered; sequence ETRLKSGQGQESSNRTGVSGNHFERDTLPT. Residues 679-693 are compositionally biased toward polar residues; the sequence is KSGQGQESSNRTGVS. The stretch at 708–799 forms a coiled coil; it reads VNNSIEMLAK…TRSLNVTEST (92 aa). The Kinesin motor domain maps to 872–1193; that stretch reads KIRVFCRLRP…LMYASRVRCI (322 aa). 953-960 provides a ligand contact to ATP; sequence GQTGSGKT. The calmodulin-binding stretch occupies residues 1201–1223; sequence VAPKEIMRLKKLIAYWKEQAGKR. Residues 1220 to 1248 are disordered; the sequence is AGKRSEDDDLEEIQEERTPKEKADNRLTS. The span at 1234–1248 shows a compositional bias: basic and acidic residues; it reads EERTPKEKADNRLTS.

The protein belongs to the TRAFAC class myosin-kinesin ATPase superfamily. Kinesin family. KIN-14 subfamily. Binds microtubules via its N-terminus containing the MyTH4 domain and binds F-actin via its FERM domain. Binding to calmodulin inhibits microtubule binding activity.

Its subcellular location is the cytoplasm. The protein localises to the cytoskeleton. Its function is as follows. Minus-end microtubule-dependent motor protein involved in the regulation of cell division. The protein is Kinesin-like protein KIN-14I of Oryza sativa subsp. japonica (Rice).